The following is a 1823-amino-acid chain: Bromodomain-containing protein DDB_G0280777 (1823 aa).

2 disordered regions span residues Asp44 to Glu83 and Leu200 to Ser281. The segment covering Ser65–Lys77 has biased composition (basic and acidic residues). The span at Lys210 to Lys224 shows a compositional bias: basic residues. Basic and acidic residues predominate over residues Ile225–Gln250. Low complexity predominate over residues Gln251–Gln262. The 108-residue stretch at Glu306–Val413 folds into the Bromo domain. Disordered regions lie at residues Glu429–Thr654, Asn753–Leu781, Ile855–Pro886, Asn949–Phe993, Leu1055–Ser1079, Ile1190–Ser1386, Gln1453–Gln1477, and Gln1679–Gln1823. Low complexity-rich tracts occupy residues Asn432–Leu486, Cys494–Ser511, Gln520–Arg555, and Ser570–Leu579. Positions Ala580–Asn590 are enriched in polar residues. The segment covering Met601–Asn614 has biased composition (basic and acidic residues). A compositionally biased stretch (acidic residues) spans Glu631–Gln643. Low complexity-rich tracts occupy residues Asn753–Asn779, Asn863–Asn884, Asn949–Asn958, Leu1055–Leu1071, and Asn1205–Asn1378. Positions Gln1679–Gln1705 are enriched in low complexity. 2 stretches are compositionally biased toward basic and acidic residues: residues Pro1716–Arg1737 and Lys1744–Leu1755. Low complexity-rich tracts occupy residues Asn1756–Val1767 and Ser1789–Ser1806. Residues Lys1813–Gln1823 are compositionally biased toward basic residues.

The chain is Bromodomain-containing protein DDB_G0280777 from Dictyostelium discoideum (Social amoeba).